We begin with the raw amino-acid sequence, 152 residues long: 6,7-dimethyl-8-ribityllumazine synthase (152 aa).

5-amino-6-(D-ribitylamino)uracil contacts are provided by residues Phe-22, Ala-56 to Glu-58, and Ala-79 to Ile-81. Ala-84–Thr-85 is a binding site for (2S)-2-hydroxy-3-oxobutyl phosphate. Catalysis depends on His-87, which acts as the Proton donor. A 5-amino-6-(D-ribitylamino)uracil-binding site is contributed by Phe-112. Arg-126 lines the (2S)-2-hydroxy-3-oxobutyl phosphate pocket.

It belongs to the DMRL synthase family.

It catalyses the reaction (2S)-2-hydroxy-3-oxobutyl phosphate + 5-amino-6-(D-ribitylamino)uracil = 6,7-dimethyl-8-(1-D-ribityl)lumazine + phosphate + 2 H2O + H(+). Its pathway is cofactor biosynthesis; riboflavin biosynthesis; riboflavin from 2-hydroxy-3-oxobutyl phosphate and 5-amino-6-(D-ribitylamino)uracil: step 1/2. In terms of biological role, catalyzes the formation of 6,7-dimethyl-8-ribityllumazine by condensation of 5-amino-6-(D-ribitylamino)uracil with 3,4-dihydroxy-2-butanone 4-phosphate. This is the penultimate step in the biosynthesis of riboflavin. The chain is 6,7-dimethyl-8-ribityllumazine synthase from Carboxydothermus hydrogenoformans (strain ATCC BAA-161 / DSM 6008 / Z-2901).